Consider the following 256-residue polypeptide: DNA repair protein RecO (256 aa).

Belongs to the RecO family.

Its function is as follows. Involved in DNA repair and RecF pathway recombination. The chain is DNA repair protein RecO from Streptococcus pneumoniae serotype 19F (strain G54).